Consider the following 420-residue polypeptide: 4-hydroxy-3-methylbut-2-en-1-yl diphosphate synthase (flavodoxin) (420 aa).

4 residues coordinate [4Fe-4S] cluster: Cys307, Cys310, Cys353, and Glu360.

Belongs to the IspG family. [4Fe-4S] cluster is required as a cofactor.

It carries out the reaction (2E)-4-hydroxy-3-methylbut-2-enyl diphosphate + oxidized [flavodoxin] + H2O + 2 H(+) = 2-C-methyl-D-erythritol 2,4-cyclic diphosphate + reduced [flavodoxin]. It functions in the pathway isoprenoid biosynthesis; isopentenyl diphosphate biosynthesis via DXP pathway; isopentenyl diphosphate from 1-deoxy-D-xylulose 5-phosphate: step 5/6. Functionally, converts 2C-methyl-D-erythritol 2,4-cyclodiphosphate (ME-2,4cPP) into 1-hydroxy-2-methyl-2-(E)-butenyl 4-diphosphate. This Brucella melitensis biotype 2 (strain ATCC 23457) protein is 4-hydroxy-3-methylbut-2-en-1-yl diphosphate synthase (flavodoxin).